The chain runs to 238 residues: 6-phosphogluconolactonase (238 aa).

The protein belongs to the glucosamine/galactosamine-6-phosphate isomerase family. 6-phosphogluconolactonase subfamily.

The catalysed reaction is 6-phospho-D-glucono-1,5-lactone + H2O = 6-phospho-D-gluconate + H(+). Its pathway is carbohydrate degradation; pentose phosphate pathway; D-ribulose 5-phosphate from D-glucose 6-phosphate (oxidative stage): step 2/3. In terms of biological role, hydrolysis of 6-phosphogluconolactone to 6-phosphogluconate. This chain is 6-phosphogluconolactonase (pgl), found in Pseudomonas aeruginosa (strain ATCC 15692 / DSM 22644 / CIP 104116 / JCM 14847 / LMG 12228 / 1C / PRS 101 / PAO1).